Consider the following 104-residue polypeptide: UPF0145 protein NP_2600A (104 aa).

It belongs to the UPF0145 family.

In Natronomonas pharaonis (strain ATCC 35678 / DSM 2160 / CIP 103997 / JCM 8858 / NBRC 14720 / NCIMB 2260 / Gabara) (Halobacterium pharaonis), this protein is UPF0145 protein NP_2600A.